The primary structure comprises 824 residues: Acyl-homoserine lactone acylase QuiP (824 aa).

A signal peptide spans 1–26; the sequence is MASPALRHFLPRFGAAAAAASFLSLA. Ser264 (nucleophile) is an active-site residue.

The protein belongs to the peptidase S45 family. In terms of assembly, heterodimer of an alpha subunit and a beta subunit processed from the same precursor.

It is found in the periplasm. The enzyme catalyses an N-acyl-L-homoserine lactone + H2O = L-homoserine lactone + a carboxylate. Functionally, catalyzes the deacylation of acyl-homoserine lactone (AHL or acyl-HSL), releasing homoserine lactone (HSL) and the corresponding fatty acid. Possesses a specificity for the degradation of long-chain acyl-HSLs (side chains of seven or more carbons in length). This Pseudomonas syringae pv. syringae (strain B728a) protein is Acyl-homoserine lactone acylase QuiP (quiP).